We begin with the raw amino-acid sequence, 280 residues long: Phosphatidylglycerol--prolipoprotein diacylglyceryl transferase (280 aa).

The next 4 membrane-spanning stretches (helical) occupy residues 26–46, 71–91, 106–126, and 132–152; these read LAIHWYGIAYVAGIMLGWFYA, FILWAAGGIVLGGRIGYILFY, IWNGGMSFHGGLIGTTIAMIL, and GIPVWSMFDIIAAVAPIGLLF. Position 154 (Arg154) interacts with a 1,2-diacyl-sn-glycero-3-phospho-(1'-sn-glycerol). 3 consecutive transmembrane segments (helical) span residues 193–213, 217–237, and 251–271; these read GLEGLVLVVLLAIAIYVFKAL, GTVTGIFVCGYALSRIFVEFF, and WLTMGMVLSTPMFLLGLWAVL.

It belongs to the Lgt family.

It localises to the cell inner membrane. It carries out the reaction L-cysteinyl-[prolipoprotein] + a 1,2-diacyl-sn-glycero-3-phospho-(1'-sn-glycerol) = an S-1,2-diacyl-sn-glyceryl-L-cysteinyl-[prolipoprotein] + sn-glycerol 1-phosphate + H(+). The protein operates within protein modification; lipoprotein biosynthesis (diacylglyceryl transfer). Catalyzes the transfer of the diacylglyceryl group from phosphatidylglycerol to the sulfhydryl group of the N-terminal cysteine of a prolipoprotein, the first step in the formation of mature lipoproteins. This chain is Phosphatidylglycerol--prolipoprotein diacylglyceryl transferase, found in Agrobacterium fabrum (strain C58 / ATCC 33970) (Agrobacterium tumefaciens (strain C58)).